Reading from the N-terminus, the 330-residue chain is Tryptophan--tRNA ligase (330 aa).

ATP is bound by residues 10–12 and 18–19; these read QPS and GN. Positions 11–19 match the 'HIGH' region motif; the sequence is PSGTLTLGN. Residue D133 coordinates L-tryptophan. Residues 145–147, I184, and 193–197 contribute to the ATP site; these read GED and KMSKS. The 'KMSKS' region signature appears at 193–197; that stretch reads KMSKS.

This sequence belongs to the class-I aminoacyl-tRNA synthetase family. As to quaternary structure, homodimer.

The protein resides in the cytoplasm. It catalyses the reaction tRNA(Trp) + L-tryptophan + ATP = L-tryptophyl-tRNA(Trp) + AMP + diphosphate + H(+). In terms of biological role, catalyzes the attachment of tryptophan to tRNA(Trp). In Halalkalibacterium halodurans (strain ATCC BAA-125 / DSM 18197 / FERM 7344 / JCM 9153 / C-125) (Bacillus halodurans), this protein is Tryptophan--tRNA ligase.